The primary structure comprises 95 residues: Small ribosomal subunit protein bS6 (95 aa).

It belongs to the bacterial ribosomal protein bS6 family.

Its function is as follows. Binds together with bS18 to 16S ribosomal RNA. The sequence is that of Small ribosomal subunit protein bS6 from Desulforamulus reducens (strain ATCC BAA-1160 / DSM 100696 / MI-1) (Desulfotomaculum reducens).